We begin with the raw amino-acid sequence, 102 residues long: Protein Tat (102 aa).

Over residues methionine 1–proline 10 the composition is skewed to basic and acidic residues. The interval methionine 1–threonine 20 is disordered. The interaction with human CREBBP stretch occupies residues methionine 1 to lysine 24. The segment at methionine 1–glycine 48 is transactivation. Positions 22, 25, and 27 each coordinate Zn(2+). A cysteine-rich region spans residues cysteine 22 to cysteine 37. N6-acetyllysine; by host PCAF is present on lysine 28. Residues cysteine 30, histidine 33, cysteine 34, and cysteine 37 each coordinate Zn(2+). Residues phenylalanine 38–glycine 48 are core. Positions tyrosine 47 to aspartate 102 are disordered. Positions glycine 48–lysine 60 are enriched in basic residues. Positions arginine 49–arginine 57 match the Nuclear localization signal, RNA-binding (TAR), and protein transduction motif. The interval arginine 49–lysine 87 is interaction with the host capping enzyme RNGTT. Lysine 50 and lysine 51 each carry N6-acetyllysine; by host EP300 and GCN5L2. Arginine 52 carries the post-translational modification Asymmetric dimethylarginine; by host PRMT6. Over residues leucine 74–glutamine 85 the composition is skewed to polar residues. The span at lysine 90 to aspartate 102 shows a compositional bias: basic and acidic residues.

It belongs to the lentiviruses Tat family. As to quaternary structure, interacts with host CCNT1. Associates with the P-TEFb complex composed at least of Tat, P-TEFb (CDK9 and CCNT1), TAR RNA, RNA Pol II. Recruits the HATs CREBBP, TAF1/TFIID, EP300, PCAF and GCN5L2. Interacts with host KAT5/Tip60; this interaction targets the latter to degradation. Interacts with the host deacetylase SIRT1. Interacts with host capping enzyme RNGTT; this interaction stimulates RNGTT. Binds to host KDR, and to the host integrins ITGAV/ITGB3 and ITGA5/ITGB1. Interacts with host KPNB1/importin beta-1 without previous binding to KPNA1/importin alpha-1. Interacts with EIF2AK2. Interacts with host nucleosome assembly protein NAP1L1; this interaction may be required for the transport of Tat within the nucleus, since the two proteins interact at the nuclear rim. Interacts with host C1QBP/SF2P32; this interaction involves lysine-acetylated Tat. Interacts with the host chemokine receptors CCR2, CCR3 and CXCR4. Interacts with host DPP4/CD26; this interaction may trigger an anti-proliferative effect. Interacts with host LDLR. Interacts with the host extracellular matrix metalloproteinase MMP1. Interacts with host PRMT6; this interaction mediates Tat's methylation. Interacts with, and is ubiquitinated by MDM2/Hdm2. Interacts with host PSMC3 and HTATIP2. Interacts with STAB1; this interaction may overcome SATB1-mediated repression of IL2 and IL2RA (interleukin) in T cells by binding to the same domain than HDAC1. Interacts (when acetylated) with human CDK13, thereby increasing HIV-1 mRNA splicing and promoting the production of the doubly spliced HIV-1 protein Nef. Interacts with host TBP; this interaction modulates the activity of transcriptional pre-initiation complex. Interacts with host RELA. Interacts with host PLSCR1; this interaction negatively regulates Tat transactivation activity by altering its subcellular distribution. Asymmetrical arginine methylation by host PRMT6 seems to diminish the transactivation capacity of Tat and affects the interaction with host CCNT1. In terms of processing, acetylation by EP300, CREBBP, GCN5L2/GCN5 and PCAF regulates the transactivation activity of Tat. EP300-mediated acetylation of Lys-50 promotes dissociation of Tat from the TAR RNA through the competitive binding to PCAF's bromodomain. In addition, the non-acetylated Tat's N-terminus can also interact with PCAF. PCAF-mediated acetylation of Lys-28 enhances Tat's binding to CCNT1. Lys-50 is deacetylated by SIRT1. Post-translationally, polyubiquitination by host MDM2 does not target Tat to degradation, but activates its transactivation function and fosters interaction with CCNT1 and TAR RNA. Phosphorylated by EIF2AK2 on serine and threonine residues adjacent to the basic region important for TAR RNA binding and function. Phosphorylation of Tat by EIF2AK2 is dependent on the prior activation of EIF2AK2 by dsRNA.

Its subcellular location is the host nucleus. The protein localises to the host nucleolus. The protein resides in the host cytoplasm. It localises to the secreted. Transcriptional activator that increases RNA Pol II processivity, thereby increasing the level of full-length viral transcripts. Recognizes a hairpin structure at the 5'-LTR of the nascent viral mRNAs referred to as the transactivation responsive RNA element (TAR) and recruits the cyclin T1-CDK9 complex (P-TEFb complex) that will in turn hyperphosphorylate the RNA polymerase II to allow efficient elongation. The CDK9 component of P-TEFb and other Tat-activated kinases hyperphosphorylate the C-terminus of RNA Pol II that becomes stabilized and much more processive. Other factors such as HTATSF1/Tat-SF1, SUPT5H/SPT5, and HTATIP2 are also important for Tat's function. Besides its effect on RNA Pol II processivity, Tat induces chromatin remodeling of proviral genes by recruiting the histone acetyltransferases (HATs) CREBBP, EP300 and PCAF to the chromatin. This also contributes to the increase in proviral transcription rate, especially when the provirus integrates in transcriptionally silent region of the host genome. To ensure maximal activation of the LTR, Tat mediates nuclear translocation of NF-kappa-B by interacting with host RELA. Through its interaction with host TBP, Tat may also modulate transcription initiation. Tat can reactivate a latently infected cell by penetrating in it and transactivating its LTR promoter. In the cytoplasm, Tat is thought to act as a translational activator of HIV-1 mRNAs. Its function is as follows. Extracellular circulating Tat can be endocytosed by surrounding uninfected cells via the binding to several surface receptors such as CD26, CXCR4, heparan sulfate proteoglycans (HSPG) or LDLR. Neurons are rarely infected, but they internalize Tat via their LDLR. Through its interaction with nuclear HATs, Tat is potentially able to control the acetylation-dependent cellular gene expression. Modulates the expression of many cellular genes involved in cell survival, proliferation or in coding for cytokines or cytokine receptors. Tat plays a role in T-cell and neurons apoptosis. Tat induced neurotoxicity and apoptosis probably contribute to neuroAIDS. Circulating Tat also acts as a chemokine-like and/or growth factor-like molecule that binds to specific receptors on the surface of the cells, affecting many cellular pathways. In the vascular system, Tat binds to ITGAV/ITGB3 and ITGA5/ITGB1 integrins dimers at the surface of endothelial cells and competes with bFGF for heparin-binding sites, leading to an excess of soluble bFGF. This is Protein Tat from Human immunodeficiency virus type 1 group N (isolate YBF106) (HIV-1).